The primary structure comprises 469 residues: MIPVTSFAGQSVAVFGLGGSGLASCHALKAGGAEVIACDDNLDRMVEAAQAGFITADLRNLPWTNFAALVLTPGVPLTHPAPHWTVLKAQEAGVEVIGDVELFCRERKAHAPRAPFVAITGTNGKSTTTALIAHLLREAGWDTQLGGNIGTAILSLEPPKDGRVHVIEMSSYQIDLTPSLDPTVGILLNVTEDHIDRHGTIEHYAAVKERLVAGVQDGGTSIIGVDDEFGRAAADRIERAGKRVVRMSVQGPVTFGITADLDSIRRVDGGTSTEVAKLGGIGSLRGLHNAQNAAAAAAAVLALGVSPEVLQQGLRSFPGLAHRMEQVGRQVGEQGTTLFVNDSKATNADAAAKALASFGDIFWIAGGKPKTGGIESLAEYFPRIRKAYLIGQAAQEFAATLEGRVPYEISETLEAAVPAAARDAAASGLAEPVVLLSPACASFDQFRNFELRGTRFRELVTALDGVAAV.

Residue 121–127 (GTNGKST) coordinates ATP.

Belongs to the MurCDEF family.

It is found in the cytoplasm. It catalyses the reaction UDP-N-acetyl-alpha-D-muramoyl-L-alanine + D-glutamate + ATP = UDP-N-acetyl-alpha-D-muramoyl-L-alanyl-D-glutamate + ADP + phosphate + H(+). It participates in cell wall biogenesis; peptidoglycan biosynthesis. In terms of biological role, cell wall formation. Catalyzes the addition of glutamate to the nucleotide precursor UDP-N-acetylmuramoyl-L-alanine (UMA). The sequence is that of UDP-N-acetylmuramoylalanine--D-glutamate ligase from Rhodopseudomonas palustris (strain ATCC BAA-98 / CGA009).